The sequence spans 429 residues: C4-dicarboxylate transport protein (429 aa).

8 helical membrane passes run 9–29, 45–65, 79–99, 149–169, 185–205, 223–243, 308–328, and 356–376; these read VLYV…HYYP, LIKM…IAGM, LLYF…ATHI, GEIL…AHLG, VLFG…FGAM, LIGT…GTIA, IYMT…LTWM, and AATL…ILGI.

This sequence belongs to the dicarboxylate/amino acid:cation symporter (DAACS) (TC 2.A.23) family.

The protein localises to the cell inner membrane. Responsible for the transport of dicarboxylates such as succinate, fumarate, and malate from the periplasm across the membrane. This chain is C4-dicarboxylate transport protein, found in Burkholderia lata (strain ATCC 17760 / DSM 23089 / LMG 22485 / NCIMB 9086 / R18194 / 383).